Reading from the N-terminus, the 337-residue chain is Calcium-binding protein 39-like (337 aa).

It belongs to the Mo25 family. Component of a trimeric complex composed of STK11/LKB1, STRAD (STRADA or STRADB) and CAB39/MO25 (CAB39/MO25alpha or CAB39L/MO25beta): the complex tethers STK11/LKB1 in the cytoplasm and stimulates its catalytic activity.

In terms of biological role, component of a complex that binds and activates STK11/LKB1. In the complex, required to stabilize the interaction between CAB39/MO25 (CAB39/MO25alpha or CAB39L/MO25beta) and STK11/LKB1. The polypeptide is Calcium-binding protein 39-like (CAB39L) (Homo sapiens (Human)).